Consider the following 185-residue polypeptide: Ribosome-recycling factor (185 aa).

It belongs to the RRF family.

It is found in the cytoplasm. In terms of biological role, responsible for the release of ribosomes from messenger RNA at the termination of protein biosynthesis. May increase the efficiency of translation by recycling ribosomes from one round of translation to another. The protein is Ribosome-recycling factor of Nocardia farcinica (strain IFM 10152).